We begin with the raw amino-acid sequence, 372 residues long: Spermidine/putrescine import ATP-binding protein PotA (372 aa).

An ABC transporter domain is found at 12–250; that stretch reads VSIRSVRKVY…PRNRFVADFI (239 aa). 48 to 55 serves as a coordination point for ATP; that stretch reads GPSGCGKT.

Belongs to the ABC transporter superfamily. Spermidine/putrescine importer (TC 3.A.1.11.1) family. The complex is composed of two ATP-binding proteins (PotA), two transmembrane proteins (PotB and PotC) and a solute-binding protein (PotD).

It localises to the cell inner membrane. It catalyses the reaction ATP + H2O + polyamine-[polyamine-binding protein]Side 1 = ADP + phosphate + polyamineSide 2 + [polyamine-binding protein]Side 1.. In terms of biological role, part of the ABC transporter complex PotABCD involved in spermidine/putrescine import. Responsible for energy coupling to the transport system. This Pseudomonas fluorescens (strain ATCC BAA-477 / NRRL B-23932 / Pf-5) protein is Spermidine/putrescine import ATP-binding protein PotA.